A 321-amino-acid polypeptide reads, in one-letter code: D-alanine--D-alanine ligase (321 aa).

One can recognise an ATP-grasp domain in the interval 121–315; sequence RSWFLTNNIN…FVNLIEEILK (195 aa). Residue 148 to 199 coordinates ATP; that stretch reads IKRPYVIKPFTQGSSIGVEVIFEEDDFNFANYDFPYGDEVIIEKYIKGRELQ. Residues Glu-268, Glu-282, and Asn-284 each contribute to the Mg(2+) site.

Belongs to the D-alanine--D-alanine ligase family. The cofactor is Mg(2+). Mn(2+) serves as cofactor.

The protein resides in the cytoplasm. The enzyme catalyses 2 D-alanine + ATP = D-alanyl-D-alanine + ADP + phosphate + H(+). It functions in the pathway cell wall biogenesis; peptidoglycan biosynthesis. Its function is as follows. Cell wall formation. This Rickettsia bellii (strain OSU 85-389) protein is D-alanine--D-alanine ligase.